Reading from the N-terminus, the 623-residue chain is MDLISVLPSASKSCVCLHKPLSSSTHKLKPFCKTIRILGMPRRWKFAGPSMSLSTVASDDDIQRRTGGYHSNLWNDDVIQFLSTPYGELAYRERAERLIDEVRDIFSSMSLEDGEFSDLIQRLWMVDNVERLGIDRHFKNEIKSALDYVYSYWSEKGIGCGTKSIITNLNSTALGFRTLRLHGYPVSADVLKHFRNQIGQFVSCPSETEEDIRSMVNLYRASLIAFPGEEVMEEAERFSEKYLKETLQKIPDCSLSREIGDVLEHGWHTNLPRLEARNYIDVFGQDTKNMESNRKTEKLLELAKLEFNIFQSIQETELESLLRWWNDSGSPQITFTRHRHVEYYTLASCIAFEPQHSGFRLGFAKACHIITVLDDMYDLFGTVDELKLFTAAIKRWDPSATDCLPQYMKGIYMMVYNTVNEMSAEAQKAQGRDTLNYARQAWEDCLDSYMQEAKWIATGFLPTFEEYLENGKVSSAHRVSALQPMLTMDIPFPPHILKEVDFPSNLNDLACAMLRLRGDTRCYQADRARGEETSCISCYMKDNPGATEEDALNRLNVMISGVIKELNWELLKPDSGVPISSKKINFDITRAFHYGYKYRDGYSVSSVETKSFVMRTLLEPVPL.

The transit peptide at 1 to 52 (MDLISVLPSASKSCVCLHKPLSSSTHKLKPFCKTIRILGMPRRWKFAGPSMS) directs the protein to the chloroplast. Positions 374, 378, and 526 each coordinate Mg(2+). The short motif at 374-378 (DDMYD) is the DDXXD motif element.

This sequence belongs to the terpene synthase family. Tpsd subfamily. The cofactor is Mg(2+). Requires Mn(2+) as cofactor.

The protein resides in the plastid. It localises to the chloroplast. It carries out the reaction (2E)-geranyl diphosphate = (1S,5S)-alpha-pinene + diphosphate. The catalysed reaction is (2E)-geranyl diphosphate = (1S,5S)-beta-pinene + diphosphate. The enzyme catalyses (2E)-geranyl diphosphate = (-)-beta-phellandrene + diphosphate. It participates in terpene metabolism; oleoresin biosynthesis. The protein operates within secondary metabolite biosynthesis; terpenoid biosynthesis. Monoterpene synthase (TPS) involved in the biosynthesis of monoterpene natural products included in conifer oleoresin secretions and volatile emissions; these compounds contribute to biotic and abiotic stress defense against herbivores and pathogens. Catalyzes the conversion of (2E)-geranyl diphosphate (GPP) to (-)-alpha-pinene and (-)-beta-pinene, and, to a lower extent, to (-)-beta-phellandrene. The polypeptide is (-)-alpha-pinene synthase 1, chloroplastic (Pinus banksiana (Jack pine)).